A 372-amino-acid chain; its full sequence is MTIPFQSSTAPTLGVEMELQIIDPATGNLTPRGPELVTFCEEHPEVGLVVKPELVQATIEINTGICKDVAQVERDLTTQLTLLRSVCRERGVSFLSAGTHPFARWRERRYTQTPRYRALVDKHVWTARRMQIYGLHVHVGMPDGDTAIQVINQITQYAPMLLALSANSPFWEGDDTGLDSCRTKVFENLSSAGLPFRFENWEGYENLINVLLETGSIGSQREIWWDIRPHSDFGTIEVRICDATRTLAEVLALTALVQCLAVYFRRLYENGEEIRLLHPGIIRENKWRACRWGLEGELIDPLTLKGVPTRKLIEQTVGEMQSLAAELGCSAYLAAIPAILASGNGATRQRRIYSQSRSLVAVVADLEAGLAT.

This sequence belongs to the glutamate--cysteine ligase type 2 family. YbdK subfamily.

The catalysed reaction is L-cysteine + L-glutamate + ATP = gamma-L-glutamyl-L-cysteine + ADP + phosphate + H(+). ATP-dependent carboxylate-amine ligase which exhibits weak glutamate--cysteine ligase activity. This is Putative glutamate--cysteine ligase 2 from Gloeobacter violaceus (strain ATCC 29082 / PCC 7421).